The primary structure comprises 156 residues: Small ribosomal subunit protein uS7 (156 aa).

It belongs to the universal ribosomal protein uS7 family. In terms of assembly, part of the 30S ribosomal subunit. Contacts proteins S9 and S11.

One of the primary rRNA binding proteins, it binds directly to 16S rRNA where it nucleates assembly of the head domain of the 30S subunit. Is located at the subunit interface close to the decoding center, probably blocks exit of the E-site tRNA. This Rubrobacter xylanophilus (strain DSM 9941 / JCM 11954 / NBRC 16129 / PRD-1) protein is Small ribosomal subunit protein uS7.